Here is a 427-residue protein sequence, read N- to C-terminus: Serine hydroxymethyltransferase (427 aa).

(6S)-5,6,7,8-tetrahydrofolate is bound by residues Leu-122 and Gly-126–Leu-128. An N6-(pyridoxal phosphate)lysine modification is found at Lys-231. (6S)-5,6,7,8-tetrahydrofolate is bound at residue Ser-355–Phe-357.

It belongs to the SHMT family. In terms of assembly, homodimer. Pyridoxal 5'-phosphate is required as a cofactor.

The protein localises to the cytoplasm. The enzyme catalyses (6R)-5,10-methylene-5,6,7,8-tetrahydrofolate + glycine + H2O = (6S)-5,6,7,8-tetrahydrofolate + L-serine. It participates in one-carbon metabolism; tetrahydrofolate interconversion. It functions in the pathway amino-acid biosynthesis; glycine biosynthesis; glycine from L-serine: step 1/1. In terms of biological role, catalyzes the reversible interconversion of serine and glycine with tetrahydrofolate (THF) serving as the one-carbon carrier. This reaction serves as the major source of one-carbon groups required for the biosynthesis of purines, thymidylate, methionine, and other important biomolecules. Also exhibits THF-independent aldolase activity toward beta-hydroxyamino acids, producing glycine and aldehydes, via a retro-aldol mechanism. This Nostoc sp. (strain PCC 7120 / SAG 25.82 / UTEX 2576) protein is Serine hydroxymethyltransferase.